The sequence spans 1201 residues: Potassium channel subfamily T member 1 (1201 aa).

Residues 1 to 28 form a disordered region; sequence MARAKLKNSPSESNSHVKTVPPATTEDV. The Cytoplasmic portion of the chain corresponds to 1–92; the sequence is MARAKLKNSP…FFIKNQRSSL (92 aa). The span at 8–17 shows a compositional bias: polar residues; that stretch reads NSPSESNSHV. A helical transmembrane segment spans residues 93-115; it reads RIRLFNFSLKLLTCLLYIVRVLL. Topologically, residues 116-152 are extracellular; sequence DNPEEGIGCWECEKQNYTLFNQSTKINWSHIFWVDRK. N-linked (GlcNAc...) asparagine glycans are attached at residues asparagine 131 and asparagine 136. Residues 153-175 form a helical membrane-spanning segment; the sequence is LPLWAVQVSIALISFLETMLLIY. Residues 176–184 lie on the Cytoplasmic side of the membrane; the sequence is LSYKGNIWE. The chain crosses the membrane as a helical span at residues 185–206; it reads QIFRISFILEMINTVPFIITIF. At 207-216 the chain is on the extracellular side; the sequence is WPPLRNLFIP. A helical transmembrane segment spans residues 217–229; it reads VFLNCWLAKYALE. At 230–249 the chain is on the cytoplasmic side; that stretch reads NMINDLHRAIQRTQSAMFNQ. A helical transmembrane segment spans residues 250–272; sequence VLILICTLLCLVFTGTCGIQHLE. Topologically, residues 273–279 are extracellular; the sequence is RAGEKLS. Residues 280 to 300 constitute an intramembrane region (pore-forming); that stretch reads LFKSFYFCIVTFSTVGYGDVT. K(+) is bound by residues valine 294 and glycine 295. Topologically, residues 301-304 are extracellular; the sequence is PKIW. Residues 305–326 form a helical membrane-spanning segment; it reads PSQLLVVIMICVALVVLPLQFE. Topologically, residues 327–1201 are cytoplasmic; that stretch reads ELVYLWMERQ…NPETRDETQL (875 aa). Residues 350 to 486 enclose the RCK N-terminal 1 domain; the sequence is EKHVVLCVSS…FHVKFADHVV (137 aa). Leucine 511, histidine 514, serine 536, and asparagine 538 together coordinate Na(+). Zn(2+) contacts are provided by cysteine 750 and cysteine 751. 2 residues coordinate K(+): arginine 753 and lysine 756. Positions 753 and 756 each coordinate Na(+). Zn(2+) contacts are provided by cysteine 758 and histidine 760. The K(+) site is built by asparagine 761, tyrosine 769, and glycine 770. Na(+) is bound at residue phenylalanine 771. The RCK N-terminal 2 domain occupies 773 to 913; that stretch reads NKLIIVSAET…QFRAKDSYSL (141 aa). The K(+) site is built by serine 779, leucine 810, aspartate 812, glycine 834, and aspartate 857. Positions 1175-1201 are disordered; it reads NDGHSRKSSCSNKLGPCNPETRDETQL.

It belongs to the potassium channel family. Calcium-activated (TC 1.A.1.3) subfamily. KCa4.1/KCNT1 sub-subfamily. Homotetramer; which constitutes the Na(+)-activated K(+) channel. Interacts with KCNT2; these heterodimer channels differ from the homomers in their unitary conductance, kinetic behavior, subcellular localization, and response to activation of protein kinase C. In terms of processing, phosphorylated by protein kinase C. Phosphorylation of the C-terminal domain increases channel activity.

It is found in the cell membrane. The enzyme catalyses K(+)(in) = K(+)(out). With respect to regulation, activated by high intracellular Na(+). In addition to activation by Na(+), is cooperatively activated by intracellular Cl(-) levels. Inhibited by Zn(2+). Activated upon stimulation of G-protein coupled receptors, such as CHRM1 and GRIA1. Functionally, sodium-activated K(+) channel. Acts as an important mediator of neuronal membrane excitability. Contributes to the delayed outward currents. Regulates of neuronal bursting in sensory neurons. Contributes to synaptic development and plasticity. This Gallus gallus (Chicken) protein is Potassium channel subfamily T member 1 (KCNT1).